The primary structure comprises 227 residues: Translation initiation factor 6 (227 aa).

The protein belongs to the eIF-6 family.

Functionally, binds to the 50S ribosomal subunit and prevents its association with the 30S ribosomal subunit to form the 70S initiation complex. This chain is Translation initiation factor 6, found in Pyrococcus abyssi (strain GE5 / Orsay).